Here is a 626-residue protein sequence, read N- to C-terminus: Endoglucanase 19 (626 aa).

The first 23 residues, 1 to 23, serve as a signal peptide directing secretion; sequence MGSRTTISILVVLLLGLVQLAIS. Catalysis depends on Asp79, which acts as the Nucleophile. Residues His412, Asp464, and Glu473 contribute to the active site. Positions 515–536 are disordered; that stretch reads APVPQRKPTKPPAASSPSPITI. Residues 526-536 show a composition bias toward low complexity; sequence PAASSPSPITI. N-linked (GlcNAc...) asparagine glycosylation is found at Asn560 and Asn622.

The protein belongs to the glycosyl hydrolase 9 (cellulase E) family.

It localises to the secreted. It carries out the reaction Endohydrolysis of (1-&gt;4)-beta-D-glucosidic linkages in cellulose, lichenin and cereal beta-D-glucans.. This is Endoglucanase 19 from Arabidopsis thaliana (Mouse-ear cress).